The chain runs to 328 residues: 3-dehydroquinate synthase (328 aa).

It belongs to the archaeal-type DHQ synthase family.

The enzyme catalyses 2-amino-2,3,7-trideoxy-D-lyxo-hept-6-ulosonate + NAD(+) + H2O = 3-dehydroquinate + NH4(+) + NADH + H(+). Functionally, catalyzes the oxidative deamination and cyclization of 2-amino-3,7-dideoxy-D-threo-hept-6-ulosonic acid (ADH) to yield 3-dehydroquinate (DHQ), which is fed into the canonical shikimic pathway of aromatic amino acid biosynthesis. This Methanoculleus marisnigri (strain ATCC 35101 / DSM 1498 / JR1) protein is 3-dehydroquinate synthase.